The chain runs to 550 residues: Solute carrier family 22 member 11 (550 aa).

Topologically, residues 1 to 10 are cytoplasmic; that stretch reads MAFSKLLEQA. Residues 11 to 31 traverse the membrane as a helical segment; the sequence is GGVGLFQTLQVLTFILPCLMI. Residues 32–142 lie on the Extracellular side of the membrane; that stretch reads PSQMLLENFS…DLVCSSQGLK (111 aa). N-linked (GlcNAc...) asparagine glycans are attached at residues N39, N56, and N99. A helical membrane pass occupies residues 143–163; the sequence is PLSQSIFMSGILVGSFIWGLL. Over 164 to 174 the chain is Cytoplasmic; it reads SYRFGRKPMLS. Residues 175–195 traverse the membrane as a helical segment; the sequence is WCCLQLAVAGTSTIFAPTFVI. Residues 196 to 200 are Extracellular-facing; that stretch reads YCGLR. The chain crosses the membrane as a helical span at residues 201 to 221; it reads FVAAFGMAGIFLSSLTLMVEW. Over 222-231 the chain is Cytoplasmic; that stretch reads TTTSRRAVTM. A helical transmembrane segment spans residues 232 to 252; that stretch reads TVVGCAFSAGQAALGGLAFAL. The Extracellular segment spans residues 253–256; that stretch reads RDWR. A helical membrane pass occupies residues 257–277; the sequence is TLQLAASVPFFAISLISWWLP. The Cytoplasmic portion of the chain corresponds to 278–346; it reads ESARWLIIKG…FCVPVLRWRS (69 aa). A helical transmembrane segment spans residues 347 to 367; sequence CAMLVVNFSLLISYYGLVFDL. Residues 368–378 lie on the Extracellular side of the membrane; that stretch reads QSLGRDIFLLQ. Residues 379-399 traverse the membrane as a helical segment; sequence ALFGAVDFLGRATTALLLSFL. The Cytoplasmic segment spans residues 400–402; it reads GRR. The helical transmembrane segment at 403–423 threads the bilayer; sequence TIQAGSQAMAGLAILANMLVP. Over 424–430 the chain is Extracellular; it reads QDLQTLR. A helical membrane pass occupies residues 431 to 451; that stretch reads VVFAVLGKGCFGISLTCLTIY. The Cytoplasmic segment spans residues 452–463; the sequence is KAELFPTPVRMT. The helical transmembrane segment at 464 to 484 threads the bilayer; that stretch reads ADGILHTVGRLGAMMGPLILM. Residues 485-490 are Extracellular-facing; the sequence is SRQALP. Residues 491-511 form a helical membrane-spanning segment; it reads LLPPLLYGVISIASSLVVLFF. Residues 512–550 are Cytoplasmic-facing; it reads LPETQGLPLPDTIQDLESQKSTAAQGNRQEAVTVESTSL. The interval 531 to 550 is disordered; it reads KSTAAQGNRQEAVTVESTSL.

It belongs to the major facilitator (TC 2.A.1) superfamily. Organic cation transporter (TC 2.A.1.19) family. N-glycosylated. Contains several complex-type N-glycans. As to expression, expressed in placental trophoblasts, syncytiotrophoblast and cytotrophoblast. Also located in the proximal tubules in kidneys.

Its subcellular location is the cell membrane. The protein localises to the apical cell membrane. It localises to the basal cell membrane. The enzyme catalyses estrone 3-sulfate(out) + glutarate(in) = estrone 3-sulfate(in) + glutarate(out). The catalysed reaction is dehydroepiandrosterone 3-sulfate(out) = dehydroepiandrosterone 3-sulfate(in). It catalyses the reaction prostaglandin F2alpha(out) = prostaglandin F2alpha(in). It carries out the reaction prostaglandin E2(out) = prostaglandin E2(in). Functionally, antiporter that mediates the transport of conjugated steroids and other specific organic anions at the basal membrane of syncytiotrophoblast and at the apical membrane of proximal tubule epithelial cells, in exchange for anionic compounds. May be responsible for placental absorption of fetal-derived steroid sulfates such as estrone sulfate (E1S) and the steroid hormone precursor dehydroepiandrosterone sulfate (DHEA-S), as well as clearing waste products and xenobiotics from the fetus. Maybe also be involved in placental urate homeostasis. Facilitates the renal reabsorption of organic anions such as urate and derived steroid sulfates. Organic anion glutarate acts as conteranion for E1S renal uptake. Possible transport mode may also include DHEA-S/E1S exchange. Also interacts with inorganic anions such as chloride and hydroxyl ions, therefore possible transport modes may include E1S/Cl(-), E1S/OH(-), urate/Cl(-) and urate/OH(-). Also mediates the transport of prostaglandin E2 (PGE2) and prostaglandin F2-alpha (PGF2-alpha) and may be involved in their renal excretion. Also able to uptake anionic drugs, diuretics, bile salts and ochratoxin A. Mediates the unidirectional efflux of glutamate and aspartate. Glutamate efflux down its transmembrane gradient may drive SLC22A11/OAT4-mediated placental uptake of E1S. This Homo sapiens (Human) protein is Solute carrier family 22 member 11.